The primary structure comprises 404 residues: AT-hook motif nuclear-localized protein 3 (404 aa).

3 disordered regions span residues 1 to 51 (MEER…VPPT), 70 to 100 (PFSL…PDGT), and 113 to 133 (SVPL…GKSN). Positions 7–19 (TNINNNITSSFGL) are enriched in polar residues. Positions 35 to 51 (DPPPRPENPNPFLVPPT) are enriched in pro residues. Positions 71 to 83 (FSLTMPTENTSAE) are enriched in polar residues. The short motif at 86–94 (KKKRGRPRK) is the Bipartite nuclear localization signal element. The segment at residues 86 to 98 (KKKRGRPRKYNPD) is a DNA-binding region (a.T hook). The span at 123 to 133 (RKRGRGRGKSN) shows a compositional bias: basic residues. In terms of domain architecture, PPC spans 163-308 (GANFTPHVLI…RFGAQPSSIS (146 aa)). The disordered stretch occupies residues 359–404 (PFSSIPVGGGGGGEVGEEEGEEDDDELEGEDEEFGGDSQSDNEIPS). Over residues 373-393 (VGEEEGEEDDDELEGEDEEFG) the composition is skewed to acidic residues.

In terms of assembly, homodimer. Interacts with AHL4. Expressed in both procambium and xylem precursors of the root meristem. Also detected in the endodermis in the late elongation zone and onwards.

The protein localises to the nucleus. Its function is as follows. Transcription factor that specifically binds AT-rich DNA sequences related to the nuclear matrix attachment regions (MARs). Acts redundantly with AHL4 to regulate the formation of tissue boundary between the xylem and procambium in the root meristem. In Arabidopsis thaliana (Mouse-ear cress), this protein is AT-hook motif nuclear-localized protein 3.